The sequence spans 22 residues: Defensin D1 (22 aa).

The protein belongs to the DEFL family. Group II subfamily.

Its function is as follows. Antimicrobial peptide. Active against Gram-positive and Gram-negative bacterial pathogens. The polypeptide is Defensin D1 (Spinacia oleracea (Spinach)).